The chain runs to 536 residues: Pre-mRNA-splicing regulator female-lethal(2)D (536 aa).

Residues 1 to 91 (MSVAAMTMDD…LQQQQQQQQQ (91 aa)) are disordered. Positions 28–39 (QNLNILNSSQNS) are enriched in low complexity. Basic residues predominate over residues 57–69 (HHHHHPHPHHHHH). The segment covering 72–91 (QQQQQQQQQHLQQQQQQQQQ) has biased composition (low complexity). Residues 254–319 (KSFSEEVKKS…KQAIKDEVVA (66 aa)) adopt a coiled-coil conformation. Positions 424-450 (APRTLPPKKSKLRGITTRRNSQLEEDH) are disordered.

This sequence belongs to the fl(2)d family. Component of the WMM complex, a N6-methyltransferase complex composed of a catalytic subcomplex, named MAC, and of an associated subcomplex, named MACOM. The MAC subcomplex is composed of Ime4/Mettl3 and Mettl14. The MACOM subcomplex is composed of fl(2)d, Flacc/Xio, Hakai, vir, and, in some cases of nito. Interacts with vir and msk. Part of a complex containing fl(2)d, Sxl and vir.

Its subcellular location is the nucleus. Functionally, associated component of the WMM complex, a complex that mediates N6-methyladenosine (m6A) methylation of mRNAs, a modification that plays a role in the efficiency of mRNA splicing and is required for sex determination. Required for sex determination and dosage compensation via Sxl alternative splicing: m6A methylation acts as a key regulator of Sxl pre-mRNA and promotes female-specific alternative splicing of Sxl, which determines female physiognomy. M6A methylation is also required for neuronal functions. Required for proper inclusion of regulated exons in Ubx transcripts, leading to isoforms Ia/b and IIa/b. This is Pre-mRNA-splicing regulator female-lethal(2)D from Drosophila melanogaster (Fruit fly).